A 362-amino-acid polypeptide reads, in one-letter code: 3-isopropylmalate dehydrogenase (362 aa).

77–88 (GPKWGTGAVRPE) serves as a coordination point for NAD(+). Substrate contacts are provided by Arg95, Arg105, Arg134, and Asp223. The Mg(2+) site is built by Asp223, Asp248, and Asp252. 287 to 298 (GSAPDLPPNKVN) serves as a coordination point for NAD(+).

Belongs to the isocitrate and isopropylmalate dehydrogenases family. Homodimer. It depends on Mg(2+) as a cofactor. Mn(2+) is required as a cofactor.

The protein localises to the cytoplasm. It catalyses the reaction (2R,3S)-3-isopropylmalate + NAD(+) = 4-methyl-2-oxopentanoate + CO2 + NADH. It functions in the pathway amino-acid biosynthesis; L-leucine biosynthesis; L-leucine from 3-methyl-2-oxobutanoate: step 3/4. Functionally, catalyzes the oxidation of 3-carboxy-2-hydroxy-4-methylpentanoate (3-isopropylmalate) to 3-carboxy-4-methyl-2-oxopentanoate. The product decarboxylates to 4-methyl-2 oxopentanoate. The sequence is that of 3-isopropylmalate dehydrogenase (LEU2) from Blastobotrys adeninivorans (Yeast).